A 164-amino-acid chain; its full sequence is Transcription factor MafF (164 aa).

The interval 51–76 (RLKQRRRTLKNRGYAASCRVKRVCQK) is basic motif. The region spanning 51–114 (RLKQRRRTLK…DALRGKCEAL (64 aa)) is the bZIP domain. The tract at residues 79–93 (LQKQKSELEREVDKL) is leucine-zipper. The segment at 141–164 (KSTPGSGSGPAHGPDPAHGPASCS) is disordered. Over residues 149–164 (GPAHGPDPAHGPASCS) the composition is skewed to low complexity.

It belongs to the bZIP family. Maf subfamily. Monomer and homo- or heterodimer. Interacts with MIP. Forms high affinity heterodimers with members of the CNC-bZIP family such as NFE2L1/NRF1. In terms of tissue distribution, expressed in the term myometrium and kidney.

The protein resides in the nucleus. Since they lack a putative transactivation domain, the small Mafs behave as transcriptional repressors when they dimerize among themselves. However, they seem to serve as transcriptional activators by dimerizing with other (usually larger) basic-zipper proteins, such as NFE2L1/NRF1, and recruiting them to specific DNA-binding sites. Interacts with the upstream promoter region of the oxytocin receptor gene. May be a transcriptional enhancer in the up-regulation of the oxytocin receptor gene at parturition. The chain is Transcription factor MafF (MAFF) from Homo sapiens (Human).